Consider the following 241-residue polypeptide: Small ribosomal subunit protein uS2 (241 aa).

The protein belongs to the universal ribosomal protein uS2 family.

In Erwinia tasmaniensis (strain DSM 17950 / CFBP 7177 / CIP 109463 / NCPPB 4357 / Et1/99), this protein is Small ribosomal subunit protein uS2.